We begin with the raw amino-acid sequence, 398 residues long: Acetate kinase (398 aa).

Asn9 contributes to the Mg(2+) binding site. Position 16 (Lys16) interacts with ATP. Position 90 (Arg90) interacts with substrate. The active-site Proton donor/acceptor is Asp147. ATP-binding positions include 207–211 (HIGNG), 282–284 (DLR), and 330–334 (GVGEN). Residue Glu384 participates in Mg(2+) binding.

This sequence belongs to the acetokinase family. Homodimer. It depends on Mg(2+) as a cofactor. Requires Mn(2+) as cofactor.

The protein resides in the cytoplasm. It carries out the reaction acetate + ATP = acetyl phosphate + ADP. The protein operates within metabolic intermediate biosynthesis; acetyl-CoA biosynthesis; acetyl-CoA from acetate: step 1/2. In terms of biological role, catalyzes the formation of acetyl phosphate from acetate and ATP. Can also catalyze the reverse reaction. This Staphylococcus haemolyticus (strain JCSC1435) protein is Acetate kinase.